The chain runs to 282 residues: Undecaprenyl-diphosphatase (282 aa).

A run of 8 helical transmembrane segments spans residues 1-21 (MNLF…FLPI), 40-60 (GAAF…IYFA), 89-109 (WMIA…KHEI), 112-132 (VLRS…VLVV), 153-173 (LSWT…IPGS), 196-216 (FSFL…LYQT), 228-248 (LNLA…IAFL), and 258-278 (GIFI…IGTG).

Belongs to the UppP family.

It is found in the cell inner membrane. The enzyme catalyses di-trans,octa-cis-undecaprenyl diphosphate + H2O = di-trans,octa-cis-undecaprenyl phosphate + phosphate + H(+). In terms of biological role, catalyzes the dephosphorylation of undecaprenyl diphosphate (UPP). Confers resistance to bacitracin. This Chlorobaculum tepidum (strain ATCC 49652 / DSM 12025 / NBRC 103806 / TLS) (Chlorobium tepidum) protein is Undecaprenyl-diphosphatase.